The following is a 220-amino-acid chain: Deoxyribose-phosphate aldolase (220 aa).

The active-site Proton donor/acceptor is the aspartate 89. The Schiff-base intermediate with acetaldehyde role is filled by lysine 151. Lysine 180 acts as the Proton donor/acceptor in catalysis.

This sequence belongs to the DeoC/FbaB aldolase family. DeoC type 1 subfamily.

It localises to the cytoplasm. It carries out the reaction 2-deoxy-D-ribose 5-phosphate = D-glyceraldehyde 3-phosphate + acetaldehyde. The protein operates within carbohydrate degradation; 2-deoxy-D-ribose 1-phosphate degradation; D-glyceraldehyde 3-phosphate and acetaldehyde from 2-deoxy-alpha-D-ribose 1-phosphate: step 2/2. Catalyzes a reversible aldol reaction between acetaldehyde and D-glyceraldehyde 3-phosphate to generate 2-deoxy-D-ribose 5-phosphate. This is Deoxyribose-phosphate aldolase from Streptococcus suis (strain 05ZYH33).